Consider the following 316-residue polypeptide: Olfactory receptor 1N2 (316 aa).

Residues 1-28 (MGKPGRVNQTTVSDFLLLGLSEWPEEQP) lie on the Extracellular side of the membrane. N8 carries N-linked (GlcNAc...) asparagine glycosylation. A helical transmembrane segment spans residues 29-49 (LLFGIFLGMYLVTMVGNLLII). The Cytoplasmic segment spans residues 50-60 (LAISSDPHLHT). The helical transmembrane segment at 61 to 81 (PMYFFLANLSLTDACFTSASI) threads the bilayer. At 82–100 (PKMLANIHTQSQIISYSGC) the chain is on the extracellular side. C100 and C182 are disulfide-bonded. The helical transmembrane segment at 101-121 (LAQLYFLLMFGGLDNCLLAVM) threads the bilayer. The Cytoplasmic portion of the chain corresponds to 122–145 (AYDRYVAICQPLHYSTSMSPQLCA). Residues 146 to 166 (LMLGVCWVLTNCPALMHTLLL) form a helical membrane-spanning segment. The Extracellular segment spans residues 167 to 199 (TRVAFCAQKAIPHFYCDPSALLKLACSDTHVNE). A helical transmembrane segment spans residues 200-220 (LMIITMGLLFLTVPLLLIVFS). The Cytoplasmic portion of the chain corresponds to 221-243 (YVRIFWAVFVISSPGGRWKAFST). Residues 244 to 264 (CGSHLTVVLLFYGSLMGVYLL) form a helical membrane-spanning segment. The Extracellular segment spans residues 265-274 (PPSTYSTERE). A helical transmembrane segment spans residues 275-295 (SRAAVLYMVIIPTLNPFIYSL). Topologically, residues 296–316 (RNRDMKEALGKLFVSGKTFFL) are cytoplasmic.

Belongs to the G-protein coupled receptor 1 family.

The protein resides in the membrane. Functionally, odorant receptor. The protein is Olfactory receptor 1N2 (OR1N2) of Homo sapiens (Human).